The chain runs to 202 residues: Nucleoside triphosphate pyrophosphatase (202 aa).

D79 (proton acceptor) is an active-site residue.

This sequence belongs to the Maf family. A divalent metal cation serves as cofactor.

Its subcellular location is the cytoplasm. It catalyses the reaction a ribonucleoside 5'-triphosphate + H2O = a ribonucleoside 5'-phosphate + diphosphate + H(+). It carries out the reaction a 2'-deoxyribonucleoside 5'-triphosphate + H2O = a 2'-deoxyribonucleoside 5'-phosphate + diphosphate + H(+). Functionally, nucleoside triphosphate pyrophosphatase. May have a dual role in cell division arrest and in preventing the incorporation of modified nucleotides into cellular nucleic acids. In Rhodopseudomonas palustris (strain HaA2), this protein is Nucleoside triphosphate pyrophosphatase.